The primary structure comprises 226 residues: Large ribosomal subunit protein uL1 (226 aa).

Belongs to the universal ribosomal protein uL1 family. As to quaternary structure, part of the 50S ribosomal subunit.

In terms of biological role, binds directly to 23S rRNA. The L1 stalk is quite mobile in the ribosome, and is involved in E site tRNA release. Protein L1 is also a translational repressor protein, it controls the translation of the L11 operon by binding to its mRNA. The polypeptide is Large ribosomal subunit protein uL1 (Mycoplasma capricolum subsp. capricolum (strain California kid / ATCC 27343 / NCTC 10154)).